The following is a 106-amino-acid chain: Large ribosomal subunit protein eL30 (106 aa).

This sequence belongs to the eukaryotic ribosomal protein eL30 family.

The protein is Large ribosomal subunit protein eL30 (rpl30e) of Sulfurisphaera tokodaii (strain DSM 16993 / JCM 10545 / NBRC 100140 / 7) (Sulfolobus tokodaii).